The chain runs to 388 residues: 4-hydroxy-3-methylbut-2-en-1-yl diphosphate synthase (flavodoxin) (388 aa).

Positions 281, 284, 316, and 323 each coordinate [4Fe-4S] cluster.

Belongs to the IspG family. The cofactor is [4Fe-4S] cluster.

It catalyses the reaction (2E)-4-hydroxy-3-methylbut-2-enyl diphosphate + oxidized [flavodoxin] + H2O + 2 H(+) = 2-C-methyl-D-erythritol 2,4-cyclic diphosphate + reduced [flavodoxin]. Its pathway is isoprenoid biosynthesis; isopentenyl diphosphate biosynthesis via DXP pathway; isopentenyl diphosphate from 1-deoxy-D-xylulose 5-phosphate: step 5/6. Its function is as follows. Converts 2C-methyl-D-erythritol 2,4-cyclodiphosphate (ME-2,4cPP) into 1-hydroxy-2-methyl-2-(E)-butenyl 4-diphosphate. The chain is 4-hydroxy-3-methylbut-2-en-1-yl diphosphate synthase (flavodoxin) from Paenarthrobacter aurescens (strain TC1).